We begin with the raw amino-acid sequence, 232 residues long: Vesicle transport through interaction with t-SNAREs homolog 1B (232 aa).

Position 2 is an N-acetylalanine (Ala2). Interaction with CLINT1 regions lie at residues 2 to 23 and 69 to 73; these read ATSA…GLLE and APLTF. At 2 to 208 the chain is on the cytoplasmic side; sequence ATSAASSEHF…SRKVITNKLL (207 aa). Residues 36–98 adopt a coiled-coil conformation; it reads AGTEEKKKLV…AKLHREVRST (63 aa). A Phosphothreonine modification is found at Thr103. Arg107 carries the post-translational modification Omega-N-methylarginine. At Ser138 the chain carries Phosphoserine. Positions 160–201 form a coiled coil; the sequence is GSEIIEELGEQRDQLERTKSRLVNTNENLSKSRKILRSMSRK. Residues 209-229 form a helical; Anchor for type IV membrane protein membrane-spanning segment; sequence LSVIIVLELAILVGLVYYKFF. At 230–232 the chain is on the vesicular side; that stretch reads RHH.

This sequence belongs to the VTI1 family. Forms a SNARE complex with STX7, STX8 and VAMP8 which functions in the homotypic fusion of late endosomes. Component of the SNARE complex composed of STX7, STX8, VAMP7 and VIT1B that is required for heterotypic fusion of late endosomes with lysosomes. May interact with STX17. Interacts with CLINT1.

It localises to the early endosome membrane. The protein resides in the late endosome membrane. Its subcellular location is the lysosome membrane. The protein localises to the cytoplasmic granule. It is found in the recycling endosome membrane. Functionally, V-SNARE that mediates vesicle transport pathways through interactions with t-SNAREs on the target membrane. These interactions are proposed to mediate aspects of the specificity of vesicle trafficking and to promote fusion of the lipid bilayers. In Rattus norvegicus (Rat), this protein is Vesicle transport through interaction with t-SNAREs homolog 1B (Vti1b).